Consider the following 439-residue polypeptide: Xylose isomerase (439 aa).

Active-site residues include His101 and Asp104. Mg(2+)-binding residues include Glu232, Glu268, His271, Asp296, Asp307, Asp309, and Asp339.

This sequence belongs to the xylose isomerase family. As to quaternary structure, homotetramer. The cofactor is Mg(2+).

It is found in the cytoplasm. The enzyme catalyses alpha-D-xylose = alpha-D-xylulofuranose. The sequence is that of Xylose isomerase (xylA) from Thermoanaerobacterium thermosaccharolyticum (strain ATCC 7956 / DSM 571 / NCIMB 9385 / NCA 3814 / NCTC 13789 / WDCM 00135 / 2032) (Clostridium thermosaccharolyticum).